Here is a 297-residue protein sequence, read N- to C-terminus: MNALTLPDIAAQASRQTLPLEWVGMCGIALPVVINNQPSAAKADAGVSLDDGEARGIHMSRLYLALEMLEQENLTPALLRRILQRFLDSHEGLAHSAYLRIQLDLLLKRPALVSPLAGWKSYPLSIEARLKNAMFHVELKIDVPYSSTCPCSAALARQLIQQQFIEDFANRPLQHADVLAWLGSPQGVVATPHSQRSNAALHLRLDDFIDELPLIALINDAENALGTAVQTAVKRADEQAFALANGQNLMFCEDAARRLNLALRRSPGINAFQLRVVHAESLHAHDAVAESRWNWEA.

This sequence belongs to the GTP cyclohydrolase IV family.

The enzyme catalyses GTP + H2O = 7,8-dihydroneopterin 3'-triphosphate + formate + H(+). It participates in cofactor biosynthesis; 7,8-dihydroneopterin triphosphate biosynthesis; 7,8-dihydroneopterin triphosphate from GTP: step 1/1. In terms of biological role, converts GTP to 7,8-dihydroneopterin triphosphate. The protein is GTP cyclohydrolase FolE2 of Pseudomonas fluorescens (strain ATCC BAA-477 / NRRL B-23932 / Pf-5).